A 316-amino-acid chain; its full sequence is Pantothenate kinase (316 aa).

G99–S106 contacts ATP.

Belongs to the prokaryotic pantothenate kinase family.

The protein resides in the cytoplasm. The enzyme catalyses (R)-pantothenate + ATP = (R)-4'-phosphopantothenate + ADP + H(+). The protein operates within cofactor biosynthesis; coenzyme A biosynthesis; CoA from (R)-pantothenate: step 1/5. In Pasteurella multocida (strain Pm70), this protein is Pantothenate kinase (coaA).